Reading from the N-terminus, the 919-residue chain is Beta-galactosidase 15 (919 aa).

A signal peptide spans 1-31; sequence MAASRGPPLLGFRALALALLLAILLLLGCSA. An N-linked (GlcNAc...) asparagine glycan is attached at Asn63. Glu220 functions as the Proton donor in the catalytic mechanism. The active-site Nucleophile is Glu289. N-linked (GlcNAc...) asparagine glycans are attached at residues Asn412, Asn530, Asn546, and Asn855. Positions 822–907 constitute an SUEL-type lectin domain; that stretch reads NAATPELRLQ…KDLAVEAKCS (86 aa).

It belongs to the glycosyl hydrolase 35 family.

The protein localises to the secreted. It localises to the extracellular space. The protein resides in the apoplast. It carries out the reaction Hydrolysis of terminal non-reducing beta-D-galactose residues in beta-D-galactosides.. The protein is Beta-galactosidase 15 of Oryza sativa subsp. japonica (Rice).